The chain runs to 559 residues: Chromatin assembly factor 1 subunit B (559 aa).

WD repeat units follow at residues 11–54, 64–103, 127–166, 169–208, 228–279, 299–340, and 344–385; these read HNKE…DGKA, RHTKAVNVVRFSPTGEILASGGDDAVILLWKVNDNKEPEQ, GHLEDVYDICWATDGNLMASASVDNTAIIWDVSKGQKISI, EHKSYVQGVTWDPLGQYVATLSCDRVLRVYSIQKKRVAFN, FHDD…RPIA, ELRP…PFGY, and IHYH…IPLK. A disordered region spans residues 386 to 559; sequence EKPVLNMRTP…NKGGTESLDP (174 aa). Phosphothreonine is present on threonine 394. Serine 409 bears the Phosphoserine mark. Threonine 419 is modified (phosphothreonine). Serine 429 is modified (phosphoserine). Positions 430-444 are enriched in low complexity; that stretch reads PGTTPPQARQAPAPT. The residue at position 433 (threonine 433) is a Phosphothreonine. Serine 458 is modified (phosphoserine). Residues 469–495 are compositionally biased toward polar residues; that stretch reads LQPSSQNTKAHPSRRVTLNTLQAWSKT. An N6-acetyllysine modification is found at lysine 494. Threonine 495, threonine 509, threonine 521, and threonine 531 each carry phosphothreonine. The segment covering 509–526 has biased composition (low complexity); that stretch reads TPPSSVPTSVISTPSTEE. At serine 538 the chain carries Phosphoserine. The span at 541–552 shows a compositional bias: basic and acidic residues; that stretch reads ELKRPRLDENKG.

Belongs to the WD repeat HIR1 family. As to quaternary structure, subunit of the CAF-1 complex that contains RBBP4, CHAF1B and CHAF1A. CHAF1A binds directly to CHAF1B. Only minor amounts of RBBP4 are complexed with CHAF1A and CHAF1B in G1 phase. In G2 and S phase also monomeric CHAF1B is detected. Interacts with histones H3.1, H3.2 and H3.1t. In terms of processing, differentially phosphorylated during cell cycle. During mitosis the p60 subunit of inactive CAF-1 is hyperphosphorylated and displaced into the cytosol. Progressivly dephosphorylated from G1 to S and G2 phase. Phosphorylated p60 is recruited to chromatin undergoing DNA repair after UV irradiation in G1, S or G2 phases.

It is found in the nucleus. The protein resides in the cytoplasm. Its function is as follows. Acts as a component of the histone chaperone complex chromatin assembly factor 1 (CAF-1), which assembles histone octamers onto DNA during replication and repair. CAF-1 performs the first step of the nucleosome assembly process, bringing newly synthesized histones H3 and H4 to replicating DNA; histones H2A/H2B can bind to this chromatin precursor subsequent to DNA replication to complete the histone octamer. The chain is Chromatin assembly factor 1 subunit B from Homo sapiens (Human).